We begin with the raw amino-acid sequence, 262 residues long: 2-keto-4-pentenoate hydratase (262 aa).

Belongs to the hydratase/decarboxylase family. MhpD subfamily. A divalent metal cation serves as cofactor.

The enzyme catalyses (S)-4-hydroxy-2-oxopentanoate = (2Z)-2-hydroxypenta-2,4-dienoate + H2O. Its pathway is aromatic compound metabolism; 3-phenylpropanoate degradation. Its function is as follows. Catalyzes the conversion of 2-hydroxypentadienoic acid (enolic form of 2-oxopent-4-enoate) to 4-hydroxy-2-ketopentanoic acid. The sequence is that of 2-keto-4-pentenoate hydratase from Paraburkholderia phymatum (strain DSM 17167 / CIP 108236 / LMG 21445 / STM815) (Burkholderia phymatum).